Reading from the N-terminus, the 96-residue chain is UPF0235 protein SO_3356 (96 aa).

This sequence belongs to the UPF0235 family.

This chain is UPF0235 protein SO_3356, found in Shewanella oneidensis (strain ATCC 700550 / JCM 31522 / CIP 106686 / LMG 19005 / NCIMB 14063 / MR-1).